We begin with the raw amino-acid sequence, 1273 residues long: MEIVSRAWESVDWDRIQTRVEAEVTALGQRQDDSEIRKTRLVEESNAYRGRTNKDSRKVAIPLIKAFQSEFDGLLARSTAAENALIDICKSIVSLPDPKSLLKGAEAWKNDAEKTQKAVEEREELKRQLIKVNNELEDLRGKDVKVRKLKDKLAKLESEQDIFIENAVNEVEKKAEQELNDRLTELIAEKEKMKEQNEILEKNMDSLESKNKDIQRKLEIAKQTVEQKDGLENEQLSIAMKDLADAKHKIVFLEERVSQLENEAEKVNESKKAGNIEDIAALGSVLVQKDDVIQQLTNDIKRHEASHVEELAKWKLAVSAVEKKNKTLIGELNELKNQLESRNDYEAIKNELRLLREIEFGDSAEANAESIERLGETVETLDRLLAEKNRRLQNENASLRVANDGFKGDEVMKAIVSGSHSRVVETVGKRVGAEEANSYRQKNTDSELIEKIQEAKRNKAVCELKFEDPTINVLTYLKNQKAKEAGKRDAPTPILAAPVTPKHVTKLGTHTITTTALPPRTQTAETTQSILQRLSNGSNKHLLNEDLKLSTVLNLKRFSGNPAKPLEAKTSEEQKAELETIEKMQKRIQVNVQALNGHPLNTTEIASHCKRLMIAYNIGQRLFAKHVMNQVVKSQGSLSELLSKPRHWNKLTDKGREAFRRIYGWISDDEAINLLCSLSPRRVWPADQNIEHPKAETLLDTSDPMEFKEEPVIRYDVTPKVEPVIEKIKSPVESPCSSQAGASSLRASRWRHDDISKEKILSILQTELKKIEEETTESKVVVPVKPTATGGNRRFSSNSTYESSSLTGKSRPSTVELILKQRISTGLQPLTQAQYDAYTVLDTDFLVKQIKEFLTMNSISQRQFGEYILGLSQGSVSDLLARPKTWAQLTQKGREPFIRMQLFMDDVEASEENDEKQPKITICDEDSDLAKTLATLLNAVHREPSEPKTSVKLEPLSEIDVIMQVPSASKPSSVVKSIDESSGEEILDTFEIVYQVKGILEENGISPRVFGDEYLHCTSSMCADLMIRTKSFENSKASEKLMYTRMKTFLSDPIAIPLLVEKEESKETVKAKIESVPAPREAPRPVKRKHSSDTDDYDLNTKKPIQRTVITDYQKDTLRFVFVNEQHPSNELCEQISLKLDMSLRTVQNWFHNHRTRSKAREKEGKVYSDALPNGTAVKSLTWKDDLQKMLDEAPAITSQWAPDYQNRAGSVKSSTSADSPTNNNYSSPIFSFDKASTTSTVKKPSSTGKLDNLVARMIRLAEGREAAAAKAS.

Coiled-coil stretches lie at residues 101–407 and 440–468; these read LLKG…DGFK and RQKN…KFED. 3 DNA-binding regions (CUT) span residues 591–681, 832–919, and 978–1065; these read NVQA…LSPR, QAQY…KQPK, and IDES…KEES. Residues 1069 to 1100 are disordered; that stretch reads VKAKIESVPAPREAPRPVKRKHSSDTDDYDLN. The segment at residues 1103–1162 is a DNA-binding region (homeobox); the sequence is KPIQRTVITDYQKDTLRFVFVNEQHPSNELCEQISLKLDMSLRTVQNWFHNHRTRSKARE.

The protein belongs to the CUT homeobox family.

It is found in the nucleus. Functionally, probable DNA-binding regulatory protein involved in cell-fate specification. This chain is Homeobox protein cut-like ceh-44, found in Caenorhabditis elegans.